Consider the following 520-residue polypeptide: Cholesterol side-chain cleavage enzyme, mitochondrial (520 aa).

The N-terminal 39 residues, 1 to 39, are a transit peptide targeting the mitochondrion; that stretch reads MLARGLALRSVLVKGCQPFLSAPRECPGHPRVGTGEGAC. A heme-binding site is contributed by C461.

The protein belongs to the cytochrome P450 family. Interacts with FDX1/adrenodoxin. The cofactor is heme.

Its subcellular location is the mitochondrion inner membrane. The enzyme catalyses 6 reduced [adrenodoxin] + cholesterol + 3 O2 + 6 H(+) = 4-methylpentanal + pregnenolone + 6 oxidized [adrenodoxin] + 4 H2O. It carries out the reaction 2 reduced [adrenodoxin] + cholesterol + O2 + 2 H(+) = (22R)-hydroxycholesterol + 2 oxidized [adrenodoxin] + H2O. It catalyses the reaction (22R)-hydroxycholesterol + 2 reduced [adrenodoxin] + O2 + 2 H(+) = (20R,22R)-20,22-dihydroxycholesterol + 2 oxidized [adrenodoxin] + H2O. The catalysed reaction is (20R,22R)-20,22-dihydroxycholesterol + 2 reduced [adrenodoxin] + O2 + 2 H(+) = 4-methylpentanal + pregnenolone + 2 oxidized [adrenodoxin] + 2 H2O. Its pathway is lipid metabolism; C21-steroid hormone metabolism. It participates in steroid metabolism; cholesterol metabolism. Functionally, a cytochrome P450 monooxygenase that catalyzes the side-chain hydroxylation and cleavage of cholesterol to pregnenolone, the precursor of most steroid hormones. Catalyzes three sequential oxidation reactions of cholesterol, namely the hydroxylation at C22 followed with the hydroxylation at C20 to yield 20R,22R-hydroxycholesterol that is further cleaved between C20 and C22 to yield the C21-steroid pregnenolone and 4-methylpentanal. Mechanistically, uses molecular oxygen inserting one oxygen atom into a substrate and reducing the second into a water molecule. Two electrons are provided by NADPH via a two-protein mitochondrial transfer system comprising flavoprotein FDXR (adrenodoxin/ferredoxin reductase) and nonheme iron-sulfur protein FDX1 or FDX2 (adrenodoxin/ferredoxin). The chain is Cholesterol side-chain cleavage enzyme, mitochondrial (CYP11A1) from Sus scrofa (Pig).